The primary structure comprises 495 residues: Cytochrome P450 2E1 (495 aa).

298 to 303 (FAGTET) serves as a coordination point for substrate. Cys437 lines the heme pocket.

The protein belongs to the cytochrome P450 family. In terms of assembly, interacts with chaperones HSP70 and HSP90; this interaction is required for initial targeting to mitochondria. Heme is required as a cofactor.

The protein resides in the endoplasmic reticulum membrane. It is found in the microsome membrane. Its subcellular location is the mitochondrion inner membrane. It carries out the reaction an organic molecule + reduced [NADPH--hemoprotein reductase] + O2 = an alcohol + oxidized [NADPH--hemoprotein reductase] + H2O + H(+). It catalyses the reaction (5Z,8Z,11Z)-eicosatrienoate + reduced [NADPH--hemoprotein reductase] + O2 = 19-hydroxy-(5Z,8Z,11Z)-eicosatrienoate + oxidized [NADPH--hemoprotein reductase] + H2O + H(+). The enzyme catalyses (5Z,8Z,11Z,14Z,17Z)-eicosapentaenoate + reduced [NADPH--hemoprotein reductase] + O2 = 19-hydroxy-(5Z,8Z,11Z,14Z,17Z)-eicosapentaenoate + oxidized [NADPH--hemoprotein reductase] + H2O + H(+). The catalysed reaction is (4Z,7Z,10Z,13Z,16Z,19Z)-docosahexaenoate + reduced [NADPH--hemoprotein reductase] + O2 = 21-hydroxy-(4Z,7Z,10Z,13Z,16Z,19Z)-docosahexaenoate + oxidized [NADPH--hemoprotein reductase] + H2O + H(+). It carries out the reaction dodecanoate + reduced [NADPH--hemoprotein reductase] + O2 = 11-hydroxydodecanoate + oxidized [NADPH--hemoprotein reductase] + H2O + H(+). It catalyses the reaction tetradecanoate + reduced [NADPH--hemoprotein reductase] + O2 = 13-hydroxytetradecanoate + oxidized [NADPH--hemoprotein reductase] + H2O + H(+). The enzyme catalyses 4-nitrophenol + NADPH + O2 + H(+) = 4-nitrocatechol + NADP(+) + H2O. It functions in the pathway lipid metabolism; fatty acid metabolism. The omega-1 hydroxylase activity is stimulated by cytochrome b5. Its function is as follows. A cytochrome P450 monooxygenase involved in the metabolism of fatty acids. Mechanistically, uses molecular oxygen inserting one oxygen atom into a substrate, and reducing the second into a water molecule, with two electrons provided by NADPH via cytochrome P450 reductase (NADPH--hemoprotein reductase). Catalyzes the hydroxylation of carbon-hydrogen bonds. Hydroxylates fatty acids specifically at the omega-1 position displaying the highest catalytic activity for saturated fatty acids. May be involved in the oxidative metabolism of xenobiotics. The sequence is that of Cytochrome P450 2E1 (CYP2E1) from Bos taurus (Bovine).